The sequence spans 140 residues: Fluoride-specific ion channel FluC 1 (140 aa).

A run of 4 helical transmembrane segments spans residues 3–23, 38–58, 80–100, and 113–133; these read TGATLIELLAVALGGGTGAAA, APLWSLAVVNLLGTVVLGLVL, ILYPLLGIGLAGGFTTFSTVM, and IAGVVGMAVVCCAVFLPALWC. The Na(+) site is built by glycine 91 and threonine 94.

This sequence belongs to the fluoride channel Fluc/FEX (TC 1.A.43) family.

The protein localises to the cell membrane. It catalyses the reaction fluoride(in) = fluoride(out). With respect to regulation, na(+) is not transported, but it plays an essential structural role and its presence is essential for fluoride channel function. In terms of biological role, fluoride-specific ion channel. Important for reducing fluoride concentration in the cell, thus reducing its toxicity. The chain is Fluoride-specific ion channel FluC 1 from Corynebacterium jeikeium (strain K411).